The chain runs to 106 residues: MICOS complex subunit MIC12 (106 aa).

A helical membrane pass occupies residues 11 to 27 (VKWTLSVGVIGSVFYLY).

The protein belongs to the MICOS complex subunit Mic12 family. Component of the mitochondrial contact site and cristae organizing system (MICOS) complex.

It is found in the mitochondrion inner membrane. Its function is as follows. Component of the MICOS complex, a large protein complex of the mitochondrial inner membrane that plays crucial roles in the maintenance of crista junctions, inner membrane architecture, and formation of contact sites to the outer membrane. This Saccharomyces cerevisiae (strain RM11-1a) (Baker's yeast) protein is MICOS complex subunit MIC12 (AIM5).